We begin with the raw amino-acid sequence, 253 residues long: Uracil-DNA glycosylase (253 aa).

The active-site Proton acceptor is the Asp79.

This sequence belongs to the uracil-DNA glycosylase (UDG) superfamily. UNG family.

Its subcellular location is the cytoplasm. The enzyme catalyses Hydrolyzes single-stranded DNA or mismatched double-stranded DNA and polynucleotides, releasing free uracil.. In terms of biological role, excises uracil residues from the DNA which can arise as a result of misincorporation of dUMP residues by DNA polymerase or due to deamination of cytosine. The sequence is that of Uracil-DNA glycosylase from Xylella fastidiosa (strain 9a5c).